The sequence spans 401 residues: S-adenosylmethionine synthase (401 aa).

An ATP-binding site is contributed by Gly137 to Asp142.

Belongs to the AdoMet synthase 2 family. Requires Mg(2+) as cofactor.

The enzyme catalyses L-methionine + ATP + H2O = S-adenosyl-L-methionine + phosphate + diphosphate. It participates in amino-acid biosynthesis; S-adenosyl-L-methionine biosynthesis; S-adenosyl-L-methionine from L-methionine: step 1/1. Functionally, catalyzes the formation of S-adenosylmethionine from methionine and ATP. This is S-adenosylmethionine synthase from Haloquadratum walsbyi (strain DSM 16790 / HBSQ001).